The following is a 119-amino-acid chain: Large ribosomal subunit protein bL20 (119 aa).

The protein belongs to the bacterial ribosomal protein bL20 family.

In terms of biological role, binds directly to 23S ribosomal RNA and is necessary for the in vitro assembly process of the 50S ribosomal subunit. It is not involved in the protein synthesizing functions of that subunit. This Afipia carboxidovorans (strain ATCC 49405 / DSM 1227 / KCTC 32145 / OM5) (Oligotropha carboxidovorans) protein is Large ribosomal subunit protein bL20.